A 226-amino-acid chain; its full sequence is MEQKICVIGFSGGQDSTTLAVWAKKRFKKVCLVGFDYAQKHSVELECAQKIASLLQLPYEIIPLDFLENITRSALFKNSNDLIGHSHAQNKDLPNSFVPNRNAIFITLLHSYAQKLGASNIALGVSQADFSGYPDCKEDFIKSIEHALNLGSNTAIKILTPLMFLNKAQEFQMAKDLGVLDLVIKETHTCYQGERKILHAYGYGCDKCPACQLRKKGFEEFQANKK.

An ATP-binding site is contributed by 10–20 (FSGGQDSTTLA). 4 residues coordinate Zn(2+): Cys190, Cys205, Cys208, and Cys211.

The protein belongs to the QueC family. The cofactor is Zn(2+).

It catalyses the reaction 7-carboxy-7-deazaguanine + NH4(+) + ATP = 7-cyano-7-deazaguanine + ADP + phosphate + H2O + H(+). It functions in the pathway purine metabolism; 7-cyano-7-deazaguanine biosynthesis. In terms of biological role, catalyzes the ATP-dependent conversion of 7-carboxy-7-deazaguanine (CDG) to 7-cyano-7-deazaguanine (preQ(0)). This is 7-cyano-7-deazaguanine synthase from Helicobacter pylori (strain ATCC 700392 / 26695) (Campylobacter pylori).